Here is a 257-residue protein sequence, read N- to C-terminus: 1-(5-phosphoribosyl)-5-[(5-phosphoribosylamino)methylideneamino] imidazole-4-carboxamide isomerase (257 aa).

Residue Asp-8 is the Proton acceptor of the active site. Asp-129 serves as the catalytic Proton donor.

Belongs to the HisA/HisF family.

It localises to the cytoplasm. The enzyme catalyses 1-(5-phospho-beta-D-ribosyl)-5-[(5-phospho-beta-D-ribosylamino)methylideneamino]imidazole-4-carboxamide = 5-[(5-phospho-1-deoxy-D-ribulos-1-ylimino)methylamino]-1-(5-phospho-beta-D-ribosyl)imidazole-4-carboxamide. It participates in amino-acid biosynthesis; L-histidine biosynthesis; L-histidine from 5-phospho-alpha-D-ribose 1-diphosphate: step 4/9. The protein is 1-(5-phosphoribosyl)-5-[(5-phosphoribosylamino)methylideneamino] imidazole-4-carboxamide isomerase of Trichormus variabilis (strain ATCC 29413 / PCC 7937) (Anabaena variabilis).